The primary structure comprises 215 residues: Adenylate kinase (215 aa).

Residue 10 to 15 (GAGKGT) participates in ATP binding. Residues 30–59 (STGDILRANVREGTELGLAAKEYMDKGELV) form an NMP region. Residues Thr-31, Arg-36, 57–59 (ELV), 85–88 (GYPR), and Gln-92 each bind AMP. Residues 126–162 (GRLMCNCGASYHRTFNPPKKDDVCDICGGKVFQRADD) are LID. Arg-127 contributes to the ATP binding site. The Zn(2+) site is built by Cys-130 and Cys-132. 135–136 (SY) is a binding site for ATP. Positions 149 and 152 each coordinate Zn(2+). AMP contacts are provided by Arg-159 and Arg-170. Lys-198 provides a ligand contact to ATP.

The protein belongs to the adenylate kinase family. As to quaternary structure, monomer.

It is found in the cytoplasm. It carries out the reaction AMP + ATP = 2 ADP. It participates in purine metabolism; AMP biosynthesis via salvage pathway; AMP from ADP: step 1/1. In terms of biological role, catalyzes the reversible transfer of the terminal phosphate group between ATP and AMP. Plays an important role in cellular energy homeostasis and in adenine nucleotide metabolism. This Methanosarcina barkeri (strain Fusaro / DSM 804) protein is Adenylate kinase.